The following is a 351-amino-acid chain: Lipoyl synthase, mitochondrial (351 aa).

[4Fe-4S] cluster is bound by residues C84, C89, C95, C115, C119, C122, and S330. The Radical SAM core domain occupies 100–319 (DKSKATATIM…QKRAMDMGFL (220 aa)).

Belongs to the radical SAM superfamily. Lipoyl synthase family. The cofactor is [4Fe-4S] cluster.

It is found in the mitochondrion. The catalysed reaction is [[Fe-S] cluster scaffold protein carrying a second [4Fe-4S](2+) cluster] + N(6)-octanoyl-L-lysyl-[protein] + 2 oxidized [2Fe-2S]-[ferredoxin] + 2 S-adenosyl-L-methionine + 4 H(+) = [[Fe-S] cluster scaffold protein] + N(6)-[(R)-dihydrolipoyl]-L-lysyl-[protein] + 4 Fe(3+) + 2 hydrogen sulfide + 2 5'-deoxyadenosine + 2 L-methionine + 2 reduced [2Fe-2S]-[ferredoxin]. The protein operates within protein modification; protein lipoylation via endogenous pathway; protein N(6)-(lipoyl)lysine from octanoyl-[acyl-carrier-protein]: step 2/2. Catalyzes the radical-mediated insertion of two sulfur atoms into the C-6 and C-8 positions of the octanoyl moiety bound to the lipoyl domains of lipoate-dependent enzymes, thereby converting the octanoylated domains into lipoylated derivatives. The sequence is that of Lipoyl synthase, mitochondrial from Yarrowia lipolytica (strain CLIB 122 / E 150) (Yeast).